The chain runs to 510 residues: Putative cytochrome P450 cyp-13B1 (510 aa).

Cys456 contributes to the heme binding site.

It belongs to the cytochrome P450 family. It depends on heme as a cofactor.

In terms of biological role, cytochromes P450 are a group of heme-thiolate monooxygenases. They oxidize a variety of structurally unrelated compounds, including steroids, fatty acids, and xenobiotics. May play a role in the regulation of lifespan. This Caenorhabditis elegans protein is Putative cytochrome P450 cyp-13B1.